The primary structure comprises 472 residues: Glutamate synthase [NADPH] small chain (472 aa).

In terms of domain architecture, 4Fe-4S ferredoxin-type spans 38–69; sequence GQAKAQADRCLSCGNPYCEWKCPVHNYIPNWL. [4Fe-4S] cluster is bound by residues C47, C50, C55, and C59.

In terms of assembly, aggregate of 4 catalytic active heterodimers, consisting of a large and a small subunit. [4Fe-4S] cluster is required as a cofactor.

It carries out the reaction 2 L-glutamate + NADP(+) = L-glutamine + 2-oxoglutarate + NADPH + H(+). It functions in the pathway amino-acid biosynthesis; L-glutamate biosynthesis via GLT pathway; L-glutamate from 2-oxoglutarate and L-glutamine (NADP(+) route): step 1/1. Its pathway is energy metabolism; nitrogen metabolism. Functionally, catalyzes the conversion of L-glutamine and 2-oxoglutarate into two molecules of L-glutamate. The chain is Glutamate synthase [NADPH] small chain (gltD) from Escherichia coli (strain K12).